The following is a 65-amino-acid chain: UPF0434 protein RPB_0294 (65 aa).

Belongs to the UPF0434 family.

In Rhodopseudomonas palustris (strain HaA2), this protein is UPF0434 protein RPB_0294.